The sequence spans 287 residues: ATP synthase gamma chain (287 aa).

It belongs to the ATPase gamma chain family. F-type ATPases have 2 components, CF(1) - the catalytic core - and CF(0) - the membrane proton channel. CF(1) has five subunits: alpha(3), beta(3), gamma(1), delta(1), epsilon(1). CF(0) has three main subunits: a, b and c.

Its subcellular location is the cell membrane. In terms of biological role, produces ATP from ADP in the presence of a proton gradient across the membrane. The gamma chain is believed to be important in regulating ATPase activity and the flow of protons through the CF(0) complex. This chain is ATP synthase gamma chain, found in Bacillus caldotenax.